The primary structure comprises 598 residues: Aspartate--tRNA(Asp/Asn) ligase (598 aa).

An L-aspartate-binding site is contributed by Glu174. The aspartate stretch occupies residues 198–201 (QQLK). Arg220 is a binding site for L-aspartate. Residues 220–222 (RDE) and Gln229 contribute to the ATP site. His458 serves as a coordination point for L-aspartate. An ATP-binding site is contributed by Glu492. Arg499 is a binding site for L-aspartate. Residue 544-547 (GIDR) participates in ATP binding.

It belongs to the class-II aminoacyl-tRNA synthetase family. Type 1 subfamily. In terms of assembly, homodimer.

It is found in the cytoplasm. It catalyses the reaction tRNA(Asx) + L-aspartate + ATP = L-aspartyl-tRNA(Asx) + AMP + diphosphate. In terms of biological role, aspartyl-tRNA synthetase with relaxed tRNA specificity since it is able to aspartylate not only its cognate tRNA(Asp) but also tRNA(Asn). Reaction proceeds in two steps: L-aspartate is first activated by ATP to form Asp-AMP and then transferred to the acceptor end of tRNA(Asp/Asn). In Dehalococcoides mccartyi (strain CBDB1), this protein is Aspartate--tRNA(Asp/Asn) ligase.